The sequence spans 152 residues: uncharacterized protein (152 aa).

N-linked (GlcNAc...) asparagine; by host glycosylation occurs at Asn-2. Helical transmembrane passes span 5–25, 36–56, and 68–88; these read MILLMVIASFVAGYLSTMNLW, LNDFYMVLLMVGWMIVMCYIL, and LIITITIIIIIVYAIRTQAFI. Residue Asn-113 is glycosylated (N-linked (GlcNAc...) asparagine; by host).

Its subcellular location is the membrane. This is an uncharacterized protein from Acanthamoeba polyphaga mimivirus (APMV).